The following is a 567-amino-acid chain: Phenylalanine--tRNA ligase beta subunit (567 aa).

Positions 287–362 constitute a B5 domain; the sequence is YFQEEVEFNV…IGEGLASFHP (76 aa). Mg(2+)-binding residues include Asp340, Asp346, Glu349, and Asp350.

The protein belongs to the phenylalanyl-tRNA synthetase beta subunit family. Type 2 subfamily. As to quaternary structure, tetramer of two alpha and two beta subunits. Mg(2+) is required as a cofactor.

Its subcellular location is the cytoplasm. It carries out the reaction tRNA(Phe) + L-phenylalanine + ATP = L-phenylalanyl-tRNA(Phe) + AMP + diphosphate + H(+). The sequence is that of Phenylalanine--tRNA ligase beta subunit from Borreliella afzelii (strain PKo) (Borrelia afzelii).